The following is a 349-amino-acid chain: Core protein VP7 (349 aa).

N193 and N287 each carry an N-linked (GlcNAc...) asparagine; by host glycan.

Belongs to the orbivirus VP7 family. As to quaternary structure, homotrimer that assemble in a complex of 260 capsomers on an inner scaffold composed of VP3.

The protein localises to the virion. In terms of biological role, the VP7 protein is one of the five proteins (with VP1, VP3, VP4, and VP6) which form the inner capsid of the virus. In Antilocapra americana (Pronghorn), this protein is Core protein VP7 (Segment-7).